A 176-amino-acid polypeptide reads, in one-letter code: ATP-dependent protease subunit HslV (176 aa).

Thr-6 is an active-site residue. The Na(+) site is built by Ser-161, Cys-164, and Thr-167.

Belongs to the peptidase T1B family. HslV subfamily. A double ring-shaped homohexamer of HslV is capped on each side by a ring-shaped HslU homohexamer. The assembly of the HslU/HslV complex is dependent on binding of ATP.

The protein resides in the cytoplasm. It carries out the reaction ATP-dependent cleavage of peptide bonds with broad specificity.. Its activity is regulated as follows. Allosterically activated by HslU binding. Functionally, protease subunit of a proteasome-like degradation complex believed to be a general protein degrading machinery. The chain is ATP-dependent protease subunit HslV from Thermosipho melanesiensis (strain DSM 12029 / CIP 104789 / BI429).